A 288-amino-acid polypeptide reads, in one-letter code: MRGIILAGGSGTRLHPLTIGVSKQLLPVYDKPLVYYPLSTLIMAGIRDILVITTPADAPAFRRLLGDGSDFGVNLSYAAQNEPEGLAQAFLIGADHIGNDTVALALGDNIFYGPGLGTSLRRFEHVSGGAIFAYWVANPSAYGVVEFDADGKAVSLEEKPKTPKSHYAVPGLYFYDNTVIDIARSLKKSARGEYEITEVNQIYLNRGQLSVEVLARGTAWLDTGTFDSLLDASDFVRTIELRQGLKVGAPEEIAWRAGFIDDDQLATRAKELLKSGYGHYLLQLLDRE.

Gly8 contacts dTDP-alpha-D-glucose. Residues Gly8, Gly11, Thr12, Arg13, Lys23, Gln24, Gln80, Gly85, and Asp108 each coordinate dTTP. Lys23, Gln24, Gln80, Gly85, Asp108, Asn109, Gly143, Glu158, Lys159, Val169, and Asp222 together coordinate dTDP-alpha-D-glucose. Asp108 contributes to the Mg(2+) binding site. Asp222 provides a ligand contact to Mg(2+).

The protein belongs to the glucose-1-phosphate thymidylyltransferase family. Mg(2+) is required as a cofactor.

The catalysed reaction is dTTP + alpha-D-glucose 1-phosphate + H(+) = dTDP-alpha-D-glucose + diphosphate. Its pathway is carbohydrate biosynthesis; dTDP-L-rhamnose biosynthesis. In terms of biological role, catalyzes the conversion of glucose-1-phosphate and dTTP to dTDP-glucose and pyrophosphate. Involved in the biosynthesis of the dTDP-L-rhamnose which is a component of the critical linker, D-N-acetylglucosamine-L-rhamnose disaccharide, which connects the galactan region of arabinogalactan to peptidoglycan via a phosphodiester linkage. The protein is Glucose-1-phosphate thymidylyltransferase (rmlA) of Mycolicibacterium smegmatis (strain ATCC 700084 / mc(2)155) (Mycobacterium smegmatis).